The following is a 241-amino-acid chain: Demethylmenaquinone methyltransferase (241 aa).

S-adenosyl-L-methionine is bound by residues T60, D81, and 106–107 (DA).

The protein belongs to the class I-like SAM-binding methyltransferase superfamily. MenG/UbiE family.

The enzyme catalyses a 2-demethylmenaquinol + S-adenosyl-L-methionine = a menaquinol + S-adenosyl-L-homocysteine + H(+). The protein operates within quinol/quinone metabolism; menaquinone biosynthesis; menaquinol from 1,4-dihydroxy-2-naphthoate: step 2/2. Functionally, methyltransferase required for the conversion of demethylmenaquinol (DMKH2) to menaquinol (MKH2). In Staphylococcus carnosus (strain TM300), this protein is Demethylmenaquinone methyltransferase.